The chain runs to 478 residues: GDP-fucose protein O-fucosyltransferase 3 (478 aa).

The Cytoplasmic portion of the chain corresponds to 1–9; it reads MVRIQRGKL. A helical; Signal-anchor for type II membrane protein membrane pass occupies residues 10–30; that stretch reads LAFCLCVMATVFLLITLQVVV. Residues 31–478 lie on the Lumenal side of the membrane; sequence ELGKFEGKKF…QEFWALVFKD (448 aa). 2 N-linked (GlcNAc...) asparagine glycosylation sites follow: Asn110 and Asn168. Cys389 and Cys392 are joined by a disulfide.

The protein belongs to the glycosyltransferase 10 family.

It localises to the endoplasmic reticulum membrane. It carries out the reaction L-threonyl-[protein] + GDP-beta-L-fucose = 3-O-(alpha-L-fucosyl)-L-threonyl-[protein] + GDP + H(+). It catalyses the reaction L-seryl-[protein] + GDP-beta-L-fucose = 3-O-(alpha-L-fucosyl)-L-seryl-[protein] + GDP + H(+). It functions in the pathway protein modification; protein glycosylation. Its function is as follows. Protein O-fucosyltransferase that specifically catalyzes O-fucosylation of serine or threonine residues in EMI domains of target proteins, such as MMRN1, MMRN2 and EMID1. Attaches fucose through an O-glycosidic linkage. O-fucosylation of EMI domain-containing proteins may be required for facilitating protein folding and secretion. May also show alpha-(1,3)-fucosyltransferase activity toward the innermost N-acetyl glucosamine (GlcNAc) residue in biantennary N-glycan acceptors. However, this was tested with a library of synthetic substrates and this activity is unsure in vivo. May be involved in biosynthesis of Lewis X-carrying biantennary N-glycans that regulate neuron stem cell self-renewal during brain development. The polypeptide is GDP-fucose protein O-fucosyltransferase 3 (FUT10) (Bos taurus (Bovine)).